Consider the following 460-residue polypeptide: Cysteine--tRNA ligase (460 aa).

Residue Cys28 coordinates Zn(2+). Positions 30–40 (MTVYDYCHLGH) match the 'HIGH' region motif. The Zn(2+) site is built by Cys209, His234, and Glu238. The 'KMSKS' region motif lies at 266–270 (KMSKS). Lys269 is an ATP binding site.

This sequence belongs to the class-I aminoacyl-tRNA synthetase family. Monomer. Zn(2+) is required as a cofactor.

It is found in the cytoplasm. The enzyme catalyses tRNA(Cys) + L-cysteine + ATP = L-cysteinyl-tRNA(Cys) + AMP + diphosphate. The polypeptide is Cysteine--tRNA ligase (Pseudomonas syringae pv. tomato (strain ATCC BAA-871 / DC3000)).